Here is a 141-residue protein sequence, read N- to C-terminus: Putative RING-H2 finger protein ATL62 (141 aa).

A helical transmembrane segment spans residues 14–32 (FFAILTVFYSIFRCCLAYC). The RING-type; degenerate zinc-finger motif lies at 79–121 (CVVCLSKFIDEDKARVLPSCNHCFHFDFTDTWLHSDYTCPNCR).

This sequence belongs to the RING-type zinc finger family. ATL subfamily.

It is found in the membrane. The catalysed reaction is S-ubiquitinyl-[E2 ubiquitin-conjugating enzyme]-L-cysteine + [acceptor protein]-L-lysine = [E2 ubiquitin-conjugating enzyme]-L-cysteine + N(6)-ubiquitinyl-[acceptor protein]-L-lysine.. It participates in protein modification; protein ubiquitination. In Arabidopsis thaliana (Mouse-ear cress), this protein is Putative RING-H2 finger protein ATL62 (ATL62).